The following is an 86-amino-acid chain: Cell division topological specificity factor (86 aa).

The protein belongs to the MinE family.

In terms of biological role, prevents the cell division inhibition by proteins MinC and MinD at internal division sites while permitting inhibition at polar sites. This ensures cell division at the proper site by restricting the formation of a division septum at the midpoint of the long axis of the cell. This Stenotrophomonas maltophilia (strain R551-3) protein is Cell division topological specificity factor.